A 239-amino-acid polypeptide reads, in one-letter code: Small ribosomal subunit protein uS3 (239 aa).

The region spanning 39 to 107 (IREFIKEECK…ELHLNIVEVR (69 aa)) is the KH type-2 domain. The segment covering 212-221 (PQARDRKAQE) has biased composition (basic and acidic residues). The tract at residues 212–239 (PQARDRKAQELQDGPAPRGAGGNRRGDR) is disordered. The segment covering 230–239 (GAGGNRRGDR) has biased composition (gly residues).

It belongs to the universal ribosomal protein uS3 family. As to quaternary structure, part of the 30S ribosomal subunit. Forms a tight complex with proteins S10 and S14.

Functionally, binds the lower part of the 30S subunit head. Binds mRNA in the 70S ribosome, positioning it for translation. The chain is Small ribosomal subunit protein uS3 from Ruegeria sp. (strain TM1040) (Silicibacter sp.).